The chain runs to 73 residues: Large ribosomal subunit protein bL31 (73 aa).

The protein belongs to the bacterial ribosomal protein bL31 family. Type A subfamily. As to quaternary structure, part of the 50S ribosomal subunit.

In terms of biological role, binds the 23S rRNA. In Ruegeria pomeroyi (strain ATCC 700808 / DSM 15171 / DSS-3) (Silicibacter pomeroyi), this protein is Large ribosomal subunit protein bL31 (rpmE).